Consider the following 770-residue polypeptide: Penicillin-binding protein 1C (770 aa).

The Cytoplasmic portion of the chain corresponds to 1-8; it reads MPRLLTKR. The chain crosses the membrane as a helical; Signal-anchor for type II membrane protein span at residues 9 to 29; it reads GCWITLAAAPFLLFLAAWGAD. At 30-770 the chain is on the periplasmic side; it reads KLWPLPLHEV…QIATVKFVMQ (741 aa). The transglycosylase stretch occupies residues 43 to 213; the sequence is RVVVAQDGTP…SRLRPDRWPE (171 aa). Residue E84 is the Proton donor; for transglycosylase activity of the active site. The segment at 278 to 559 is transpeptidase; the sequence is AGLQRRLEEL…FASAVPLLNQ (282 aa). The active-site Acyl-ester intermediate; for transpeptidase activity is S342.

The protein in the N-terminal section; belongs to the glycosyltransferase 51 family. It in the C-terminal section; belongs to the transpeptidase family.

The protein localises to the cell inner membrane. The enzyme catalyses [GlcNAc-(1-&gt;4)-Mur2Ac(oyl-L-Ala-gamma-D-Glu-L-Lys-D-Ala-D-Ala)](n)-di-trans,octa-cis-undecaprenyl diphosphate + beta-D-GlcNAc-(1-&gt;4)-Mur2Ac(oyl-L-Ala-gamma-D-Glu-L-Lys-D-Ala-D-Ala)-di-trans,octa-cis-undecaprenyl diphosphate = [GlcNAc-(1-&gt;4)-Mur2Ac(oyl-L-Ala-gamma-D-Glu-L-Lys-D-Ala-D-Ala)](n+1)-di-trans,octa-cis-undecaprenyl diphosphate + di-trans,octa-cis-undecaprenyl diphosphate + H(+). The protein operates within cell wall biogenesis; peptidoglycan biosynthesis. Its activity is regulated as follows. Transglycosylase activity can be inhibited by moenomycin. Its function is as follows. Cell wall formation. The enzyme has a penicillin-insensitive transglycosylase N-terminal domain (formation of linear glycan strands) and a transpeptidase C-terminal domain which may not be functional. The sequence is that of Penicillin-binding protein 1C (pbpC) from Escherichia coli (strain K12).